The following is a 301-amino-acid chain: NAD kinase (301 aa).

Asp-73 serves as the catalytic Proton acceptor. Residues 73–74, 160–161, Arg-188, Asp-190, Ala-198, 201–206, Ala-225, and Gln-257 contribute to the NAD(+) site; these read DG, NE, and TAYNIS.

This sequence belongs to the NAD kinase family. The cofactor is a divalent metal cation.

It is found in the cytoplasm. It carries out the reaction NAD(+) + ATP = ADP + NADP(+) + H(+). Functionally, involved in the regulation of the intracellular balance of NAD and NADP, and is a key enzyme in the biosynthesis of NADP. Catalyzes specifically the phosphorylation on 2'-hydroxyl of the adenosine moiety of NAD to yield NADP. The polypeptide is NAD kinase (Helicobacter hepaticus (strain ATCC 51449 / 3B1)).